Reading from the N-terminus, the 330-residue chain is Glucokinase (330 aa).

It belongs to the ROK (NagC/XylR) family.

Its subcellular location is the cytoplasm. It carries out the reaction D-glucose + ATP = D-glucose 6-phosphate + ADP + H(+). This chain is Glucokinase (glcK), found in Halalkalibacterium halodurans (strain ATCC BAA-125 / DSM 18197 / FERM 7344 / JCM 9153 / C-125) (Bacillus halodurans).